Consider the following 468-residue polypeptide: UDP-N-acetylmuramate--L-alanine ligase (468 aa).

Position 114-120 (114-120 (GTHGKTT)) interacts with ATP.

It belongs to the MurCDEF family.

It is found in the cytoplasm. It catalyses the reaction UDP-N-acetyl-alpha-D-muramate + L-alanine + ATP = UDP-N-acetyl-alpha-D-muramoyl-L-alanine + ADP + phosphate + H(+). It participates in cell wall biogenesis; peptidoglycan biosynthesis. Functionally, cell wall formation. The chain is UDP-N-acetylmuramate--L-alanine ligase from Rhodopseudomonas palustris (strain HaA2).